Consider the following 102-residue polypeptide: Large ribosomal subunit protein uL24 (102 aa).

It belongs to the universal ribosomal protein uL24 family. As to quaternary structure, part of the 50S ribosomal subunit.

Functionally, one of two assembly initiator proteins, it binds directly to the 5'-end of the 23S rRNA, where it nucleates assembly of the 50S subunit. One of the proteins that surrounds the polypeptide exit tunnel on the outside of the subunit. In Lysinibacillus sphaericus (strain C3-41), this protein is Large ribosomal subunit protein uL24.